The chain runs to 909 residues: Protein translocase subunit SecA (909 aa).

ATP-binding positions include glutamine 87, 105–109 (GEGKT), and aspartate 512. Residues 863–909 (LVGGGDEDDESIAAHTPMIRDGDKVGRNDPCPCGSGRKYKQCHGKLS) form a disordered region. Residues 880–889 (MIRDGDKVGR) are compositionally biased toward basic and acidic residues. Zn(2+)-binding residues include cysteine 893, cysteine 895, cysteine 904, and histidine 905. The span at 899-909 (RKYKQCHGKLS) shows a compositional bias: basic residues.

The protein belongs to the SecA family. Monomer and homodimer. Part of the essential Sec protein translocation apparatus which comprises SecA, SecYEG and auxiliary proteins SecDF-YajC and YidC. Zn(2+) serves as cofactor.

Its subcellular location is the cell inner membrane. The protein localises to the cytoplasm. The catalysed reaction is ATP + H2O + cellular proteinSide 1 = ADP + phosphate + cellular proteinSide 2.. In terms of biological role, part of the Sec protein translocase complex. Interacts with the SecYEG preprotein conducting channel. Has a central role in coupling the hydrolysis of ATP to the transfer of proteins into and across the cell membrane, serving both as a receptor for the preprotein-SecB complex and as an ATP-driven molecular motor driving the stepwise translocation of polypeptide chains across the membrane. The polypeptide is Protein translocase subunit SecA (Shewanella putrefaciens (strain CN-32 / ATCC BAA-453)).